Here is a 486-residue protein sequence, read N- to C-terminus: Mogroside I-E synthase (486 aa).

The UDP-alpha-D-glucose site is built by Ser-302, Cys-360, Gln-362, Trp-380, Asn-381, Ser-382, Glu-385, Asp-401, and Gln-402.

This sequence belongs to the UDP-glycosyltransferase family. In terms of tissue distribution, highly expressed in young fruits 15 days after anthesis (15-DAA).

It carries out the reaction mogrol + UDP-alpha-D-glucose = mogroside IE + UDP + H(+). The catalysed reaction is mogroside I-A1 + UDP-alpha-D-glucose = mogroside IIE + UDP + H(+). The enzyme catalyses mogroside II-A1 + UDP-alpha-D-glucose = mogroside IIIX + UDP + H(+). It catalyses the reaction mogroside II-A + UDP-alpha-D-glucose = mogroside III + UDP + H(+). It participates in secondary metabolite biosynthesis; terpenoid biosynthesis. In terms of biological role, UDP-glycosyltransferase involved in the biosynthesis of cucurbitacin and mogroside tetracyclic triterpene natural products (e.g. siamenoside I and mogrosides IV, V and VI). Cucurbitacins have cytotoxic properties and exhibit deterrent taste as a defense barrier against herbivores. Mogrosides are nonsugar highly oxygenated compounds used as high-intensity zero-calorie sweeteners; they also possess pharmacological properties such as regulating immunity, lowering blood sugar and lipid levels, protecting the liver, and acting as antioxidants and antitumor agents. Catalyzes the C3 primary glucosylation of mogrol, mogroside I-A1, mogroside II-A1 and mogroside II-A. This chain is Mogroside I-E synthase, found in Siraitia grosvenorii (Monk's fruit).